We begin with the raw amino-acid sequence, 340 residues long: N-acetyl-gamma-glutamyl-phosphate reductase (340 aa).

The active site involves Cys149.

This sequence belongs to the NAGSA dehydrogenase family. Type 1 subfamily.

The protein localises to the cytoplasm. It carries out the reaction N-acetyl-L-glutamate 5-semialdehyde + phosphate + NADP(+) = N-acetyl-L-glutamyl 5-phosphate + NADPH + H(+). The protein operates within amino-acid biosynthesis; L-arginine biosynthesis; N(2)-acetyl-L-ornithine from L-glutamate: step 3/4. In terms of biological role, catalyzes the NADPH-dependent reduction of N-acetyl-5-glutamyl phosphate to yield N-acetyl-L-glutamate 5-semialdehyde. In Ruthia magnifica subsp. Calyptogena magnifica, this protein is N-acetyl-gamma-glutamyl-phosphate reductase.